Here is a 275-residue protein sequence, read N- to C-terminus: Interleukin-2 receptor subunit alpha (275 aa).

Residues Met-1–Thr-21 form the signal peptide. A Sushi 1 domain is found at Glu-22 to Ser-84. The Extracellular portion of the chain corresponds to Glu-22–Gln-243. 3 disulfides stabilise this stretch: Cys-24-Cys-67, Cys-49-Cys-80, and Cys-51-Cys-82. N-linked (GlcNAc...) asparagine glycans are attached at residues Asn-60 and Asn-70. Residues Asp-91–Gln-118 are disordered. Residues Gly-108–Gln-118 are compositionally biased toward polar residues. Residues Gly-123–Ser-186 form the Sushi 2 domain. Cystine bridges form between Cys-125–Cys-168 and Cys-152–Cys-184. The tract at residues Arg-188–Cys-213 is disordered. A helical transmembrane segment spans residues Ile-244–Leu-262. Residues Thr-263–Ile-275 are Cytoplasmic-facing.

In terms of assembly, non-covalent dimer of an alpha and a beta subunit. IL2R exists in 3 different forms: a high affinity dimer, an intermediate affinity monomer (beta subunit), and a low affinity monomer (alpha subunit). The high and intermediate affinity forms also associate with a gamma subunit.

It is found in the membrane. Functionally, receptor for interleukin-2. The receptor is involved in the regulation of immune tolerance by controlling regulatory T cells (TREGs) activity. TREGs suppress the activation and expansion of autoreactive T-cells. This Felis catus (Cat) protein is Interleukin-2 receptor subunit alpha (IL2RA).